Consider the following 172-residue polypeptide: MQNKRDSYNRDDLLASSQGELFGPGYPQLPAPNMLMMDRVTKMSETEGDFGKGLILAELDITPDLWFFDCHFPGDPVMPGCLGLDAMWQLVGFFLGWVGGKGKGRALGVGEVKFTGQILPTAKKVTYEIHMKRVVNRKLVMGLADGRVCVDGKEIYVAKDLKVGLFQDTSSF.

H71 is an active-site residue.

It belongs to the thioester dehydratase family. FabA subfamily. Homodimer.

It localises to the cytoplasm. The catalysed reaction is a (3R)-hydroxyacyl-[ACP] = a (2E)-enoyl-[ACP] + H2O. The enzyme catalyses (3R)-hydroxydecanoyl-[ACP] = (2E)-decenoyl-[ACP] + H2O. It carries out the reaction (2E)-decenoyl-[ACP] = (3Z)-decenoyl-[ACP]. The protein operates within lipid metabolism; fatty acid biosynthesis. Functionally, necessary for the introduction of cis unsaturation into fatty acids. Catalyzes the dehydration of (3R)-3-hydroxydecanoyl-ACP to E-(2)-decenoyl-ACP and then its isomerization to Z-(3)-decenoyl-ACP. Can catalyze the dehydratase reaction for beta-hydroxyacyl-ACPs with saturated chain lengths up to 16:0, being most active on intermediate chain length. This Vibrio parahaemolyticus serotype O3:K6 (strain RIMD 2210633) protein is 3-hydroxydecanoyl-[acyl-carrier-protein] dehydratase.